Here is a 143-residue protein sequence, read N- to C-terminus: UPF0179 protein PTO0851 (143 aa).

The protein belongs to the UPF0179 family.

This Picrophilus torridus (strain ATCC 700027 / DSM 9790 / JCM 10055 / NBRC 100828 / KAW 2/3) protein is UPF0179 protein PTO0851.